The primary structure comprises 307 residues: Ribosomal RNA small subunit methyltransferase H (307 aa).

Residues 32–34 (GGH), Asp-52, Phe-78, Asp-99, and Gln-106 each bind S-adenosyl-L-methionine.

It belongs to the methyltransferase superfamily. RsmH family.

It localises to the cytoplasm. It carries out the reaction cytidine(1402) in 16S rRNA + S-adenosyl-L-methionine = N(4)-methylcytidine(1402) in 16S rRNA + S-adenosyl-L-homocysteine + H(+). Specifically methylates the N4 position of cytidine in position 1402 (C1402) of 16S rRNA. This Acinetobacter baumannii (strain SDF) protein is Ribosomal RNA small subunit methyltransferase H.